The following is a 551-amino-acid chain: Scaffold protein OPG125 (551 aa).

It belongs to the orthopoxvirus protein OPG125 family. In terms of assembly, homotrimer. Self-assembles to form a layer. Interacts with OPG158 (via N-terminus); this interaction is necessary for OPG125 association with membranes.

It is found in the membrane. Its function is as follows. Scaffold protein which forms a transitory spherical honeycomb lattice providing curvature and rigidity to the convex membrane of crescent and immature virions (IV). This association occurs concomitantly with viral membrane formation. Targeted by the drug rifampicin, which prevents the formation of this lattice, and hence virus morphogenesis. In the presence of rifampicin, irregularly shaped membranes that lack the honeycomb layer accumulate around areas of electron-dense viroplasm. This layer is lost from virions during maturation from IV to mature virion (MV), through the proteolysis of OPG158 N-terminus. This chain is Scaffold protein OPG125 (OPG125), found in Vaccinia virus (strain Ankara) (VACV).